The sequence spans 167 residues: G/U mismatch-specific DNA glycosylase (167 aa).

The protein belongs to the uracil-DNA glycosylase (UDG) superfamily. TDG/mug family. In terms of assembly, binds DNA as a monomer.

It localises to the cytoplasm. The catalysed reaction is Specifically hydrolyzes mismatched double-stranded DNA and polynucleotides, releasing free uracil.. In terms of biological role, excises ethenocytosine and uracil, which can arise by alkylation or deamination of cytosine, respectively, from the corresponding mispairs with guanine in ds-DNA. It is capable of hydrolyzing the carbon-nitrogen bond between the sugar-phosphate backbone of the DNA and the mispaired base. The complementary strand guanine functions in substrate recognition. Required for DNA damage lesion repair in stationary-phase cells. The polypeptide is G/U mismatch-specific DNA glycosylase (Pectobacterium atrosepticum (strain SCRI 1043 / ATCC BAA-672) (Erwinia carotovora subsp. atroseptica)).